Reading from the N-terminus, the 110-residue chain is UPF0102 protein Abu_0255 (110 aa).

It belongs to the UPF0102 family.

This Aliarcobacter butzleri (strain RM4018) (Arcobacter butzleri) protein is UPF0102 protein Abu_0255.